A 187-amino-acid chain; its full sequence is Calcium and integrin-binding family member 2 (187 aa).

3 EF-hand domains span residues 66 to 101, 103 to 138, and 144 to 179; these read RENPFKERIVEAFSEDGEGNLTFNDFVDMFSVLCES, PRELKANYAFKIYDFNTDNFICKEDLEMTLARLTKS, and EVVLVCDKVIEEADLDGDGKLGFADFEDMIAKAPDF. The Ca(2+) site is built by D116, N118, D120, D127, D157, D159, D161, K163, and D168.

In terms of assembly, monomer. Homodimer. Interacts with WHRN and MYO7A. Interacts with ITGA2B (via C-terminus cytoplasmic tail region); this interaction is stabilized/increased in a calcium and magnesium-dependent manner. Interacts with ITGA7 (via C-terminus cytoplasmic tail region); this interaction is stabilized/increased in a calcium and magnesium-dependent manner. Interacts with TMC1. Interacts with TMC2. Interacts with PIEZO1. Expressed in inner and outer segments of photoreceptor cells, as well as in the pigmented epithelium. Also observed in the inner and outer plexiform layers and in the ganglion cell layer (at protein level). Expressed in sensory hair cell stereocilia, with expression mainly at the basal body of the kinocilium and in the hair bundle stereocilia; and the apical surface of hair cells (at protein level). Located in the tip region of the stereocilia and at the apical surface of hair cells around the cuticular plate (at protein level). Not expressed in the hair bundles of the vestibular hair cells. Strongly expressed in skeletal muscles, brain, kidney and liver. Expressed in the skeletal muscle, retina and cochlea. Expressed in megakaryocytes and endothelial cells. Expressed in heart, spleen, lung, and inner ear. In the inner ear, expressed in the vestibule, basilar membrane and spiral ganglion cells. Expressed in the supporting cells in both the organ of Corti and the vestibular sensory epithelia.

Its subcellular location is the cytoplasm. The protein localises to the cell projection. It localises to the stereocilium. It is found in the photoreceptor inner segment. The protein resides in the cilium. Its subcellular location is the photoreceptor outer segment. The protein localises to the cell membrane. It localises to the sarcolemma. Functionally, calcium- and integrin-binding protein that plays a role in intracellular calcium homeostasis. Acts as an auxiliary subunit of the sensory mechanoelectrical transduction (MET) channel in hair cells. Essential for mechanoelectrical transduction (MET) currents in auditory hair cells and thereby required for hearing. Regulates the function of hair cell mechanotransduction by controlling the distribution of transmembrane channel-like proteins TMC1 and TMC2, and by regulating the function of the MET channels in hair cells. Required for the maintenance of auditory hair cell stereocilia bundle morphology and function and for hair-cell survival in the cochlea. Critical for proper photoreceptor cell maintenance and function. Plays a role in intracellular calcium homeostasis by decreasing ATP-induced calcium release. Seems to be dispensable for vestibular functions. The sequence is that of Calcium and integrin-binding family member 2 (Cib2) from Mus musculus (Mouse).